Reading from the N-terminus, the 578-residue chain is Aspartate--tRNA ligase (578 aa).

E169 provides a ligand contact to L-aspartate. Residues 191 to 194 (QTFK) form an aspartate region. R213 contacts L-aspartate. Residues 213–215 (RDE) and Q222 contribute to the ATP site. H440 contributes to the L-aspartate binding site. ATP is bound at residue E474. Position 481 (R481) interacts with L-aspartate. 526 to 529 (GLDR) lines the ATP pocket.

It belongs to the class-II aminoacyl-tRNA synthetase family. Type 1 subfamily. In terms of assembly, homodimer.

It is found in the cytoplasm. It catalyses the reaction tRNA(Asp) + L-aspartate + ATP = L-aspartyl-tRNA(Asp) + AMP + diphosphate. Its function is as follows. Catalyzes the attachment of L-aspartate to tRNA(Asp) in a two-step reaction: L-aspartate is first activated by ATP to form Asp-AMP and then transferred to the acceptor end of tRNA(Asp). The sequence is that of Aspartate--tRNA ligase from Ureaplasma parvum serovar 3 (strain ATCC 700970).